The following is a 743-amino-acid chain: Dolichyl-phosphooligosaccharide-protein glycotransferase 2 (743 aa).

At 1 to 7 (MKIDKRL) the chain is on the cytoplasmic side. A helical transmembrane segment spans residues 8–28 (MVIVAIATLFRMIPFRLKYLV). The short motif at 29–31 (GSD) is the DXD motif 1 element. The Extracellular segment spans residues 29-91 (GSDPYFHLAY…FSFLGISLYT (63 aa)). Asp31 contributes to the Mn(2+) binding site. A helical transmembrane segment spans residues 92-112 (AFRVTPVIFGVLTVVFFYLSL). At 113-119 (KKLYNRD) the chain is on the cytoplasmic side. Residues 120 to 140 (VAFIVGLFLGVNYGHIFRSMA) form a helical membrane-spanning segment. Residues 141–144 (NYYR) are Extracellular-facing. Residues Arg144 and Asp146 each coordinate Mn(2+). Residues 144–146 (RGD) carry the DXD motif 2 motif. The helical transmembrane segment at 145–165 (GDNYMLFWYSVALLGIALGLK) threads the bilayer. Residues 166–170 (TRSKY) lie on the Cytoplasmic side of the membrane. Transmembrane regions (helical) follow at residues 171 to 191 (RYLF…FWQA) and 192 to 212 (YYPI…YAYL). The Cytoplasmic segment spans residues 213 to 216 (KSPK). The helical transmembrane segment at 217-237 (LFLDSILIVLSTGLGVLIANI) threads the bilayer. At 238–272 (LGDKVGYGMLGYTDWMGKKVAETFGLEFGFIKDAY) the chain is on the extracellular side. A helical membrane pass occupies residues 273-293 (LLIHVKYLLPLSLVFLGFLII). Residues 294–302 (TKKLNPKIK) are Cytoplasmic-facing. A helical membrane pass occupies residues 303-323 (VGVLVGGSILAFIVMLVKFPA). At 324-345 (LKDLSTGFGTFREVPISETLPP) the chain is on the extracellular side. The short motif at 333–336 (TFRE) is the TIXE motif element. Residues 346–366 (TLDDLWRAYNIAIFLAALYIL) form a helical membrane-spanning segment. Over 367–373 (RLRKIRS) the chain is Cytoplasmic. A helical transmembrane segment spans residues 374–391 (GDAILLGYVITSLWMLRY). Residues 392–394 (WTR) are Extracellular-facing. Residue Arg394 participates in a glycophospholipid binding. A helical membrane pass occupies residues 395–415 (FLFTAAPAVAFLSGIGVYELT). Over 416–424 (RRIKENKIR) the chain is Cytoplasmic. The chain crosses the membrane as a helical span at residues 425-445 (ITSLGVVILLSSAFSLGEVYS). The Extracellular portion of the chain corresponds to 446-743 (VKPFMNENWE…LDRGIVRVKN (298 aa)). The interval 474–476 (WWD) is interacts with target acceptor peptide in protein substrate. A WWDYG motif motif is present at residues 474-478 (WWDWG). The DK motif motif lies at 526–533 (DILKFEAI).

The protein belongs to the STT3 family. It depends on Mn(2+) as a cofactor. The cofactor is Mg(2+).

The protein resides in the cell membrane. It catalyses the reaction an archaeal dolichyl phosphooligosaccharide + [protein]-L-asparagine = an archaeal dolichyl phosphate + a glycoprotein with the oligosaccharide chain attached by N-beta-D-glycosyl linkage to a protein L-asparagine.. It participates in protein modification; protein glycosylation. Functionally, oligosaccharyl transferase (OST) that catalyzes the initial transfer of a defined glycan (ManNAcXyl(2)GlcAMan(2)GalNAc in P.furiosus) from the lipid carrier dolichol-monophosphate to an asparagine residue within an Asn-X-Ser/Thr consensus motif in nascent polypeptide chains, the first step in protein N-glycosylation. This Pyrococcus furiosus (strain ATCC 43587 / DSM 3638 / JCM 8422 / Vc1) protein is Dolichyl-phosphooligosaccharide-protein glycotransferase 2 (aglB2).